Here is a 2259-residue protein sequence, read N- to C-terminus: Golgin subfamily A member 4 (2259 aa).

The interval 1-54 is disordered; it reads MFKKLKQKISEEQQQLQQALAPAQASSSSSTPTRTRSRTSSFTDQLDDATPNRE. A Phosphoserine modification is found at S10. Residues 12–41 show a composition bias toward low complexity; it reads EQQQLQQALAPAQASSSSSTPTRTRSRTSS. Residue T39 is modified to Phosphothreonine. Phosphoserine is present on residues S41, S104, and S111. The segment at 165 to 235 is interaction with MACF1; the sequence is SLSREQLLQR…EELQMDQQAK (71 aa). A coiled-coil region spans residues 167–2182; that stretch reads SREQLLQRLR…SYEKSVCAAA (2016 aa). Composition is skewed to basic and acidic residues over residues 1932-1946 and 1954-1977; these read LEDR…HVIE and DGRH…LSKE. The disordered stretch occupies residues 1932 to 1977; the sequence is LEDRPEENSKSHVIESKLGTPMDGRHSDLESKLAGSEREKQKLSKE. Residues 2199-2246 enclose the GRIP domain; sequence LFGEPTEFEYLRKVLFEYMMGRETKTMAKVITTVLRFPDDQAQKILER.

Homodimer. Interacts with GTP-bound ARL1 and ARL3. Interacts with MACF1. Directly interacts with TBC1D23. Interacts with FAM91A1; this interaction may be mediated by TBC1D23. As to expression, expressed in the head of epididymal sperm but not in testicular sperm (at protein level).

Its subcellular location is the cytoplasm. The protein resides in the golgi apparatus membrane. It is found in the golgi apparatus. The protein localises to the trans-Golgi network membrane. In terms of biological role, involved in vesicular trafficking at the Golgi apparatus level. May play a role in delivery of transport vesicles containing GPI-linked proteins from the trans-Golgi network through its interaction with MACF1. Involved in endosome-to-Golgi trafficking. This is Golgin subfamily A member 4 from Rattus norvegicus (Rat).